A 377-amino-acid chain; its full sequence is F-box protein At4g00755 (377 aa).

The 41-residue stretch at 7-47 (LDTDTSLSILSCLDDPSDIVRASAVSRSWRQFVVKYSLSKN) folds into the F-box domain.

This is F-box protein At4g00755 from Arabidopsis thaliana (Mouse-ear cress).